The sequence spans 188 residues: Ion-translocating oxidoreductase complex subunit G (188 aa).

Over 1-9 (MSDSKEITK) the chain is Cytoplasmic. A helical membrane pass occupies residues 10–30 (VIVTMVVISAVAAALLALTYT). Topologically, residues 31–188 (PTQAQLKLLQ…AVDYVSAQEG (158 aa)) are extracellular. Threonine 166 is subject to FMN phosphoryl threonine.

This sequence belongs to the RnfG family. The Rnf complex is probably composed of eight subunits, including RnfA, RnfB, RnfC, RnfD, RnfE and RnfG. It depends on FMN as a cofactor.

The protein resides in the cell membrane. Functionally, part of a membrane-bound complex that couples electron transfer with translocation of ions across the membrane. Catalyzes Na(+) transport, most probably coupled to electron transfer from reduced ferredoxin to methanophenazine and heterodisulfide reductase. Involved in heterodisulfide reduction during methanogenesis from acetate. In Methanosarcina acetivorans (strain ATCC 35395 / DSM 2834 / JCM 12185 / C2A), this protein is Ion-translocating oxidoreductase complex subunit G.